A 207-amino-acid polypeptide reads, in one-letter code: LexA repressor (207 aa).

The segment at residues 28-48 (VREIGEAVGLASSSTVHGHLA) is a DNA-binding region (H-T-H motif). Catalysis depends on for autocatalytic cleavage activity residues Ser-129 and Lys-167.

The protein belongs to the peptidase S24 family. In terms of assembly, homodimer.

It carries out the reaction Hydrolysis of Ala-|-Gly bond in repressor LexA.. Its function is as follows. Represses a number of genes involved in the response to DNA damage (SOS response), including recA and lexA. In the presence of single-stranded DNA, RecA interacts with LexA causing an autocatalytic cleavage which disrupts the DNA-binding part of LexA, leading to derepression of the SOS regulon and eventually DNA repair. In Brevibacillus brevis (strain 47 / JCM 6285 / NBRC 100599), this protein is LexA repressor.